The following is an 87-amino-acid chain: Cell division topological specificity factor (87 aa).

The protein belongs to the MinE family.

In terms of biological role, prevents the cell division inhibition by proteins MinC and MinD at internal division sites while permitting inhibition at polar sites. This ensures cell division at the proper site by restricting the formation of a division septum at the midpoint of the long axis of the cell. The sequence is that of Cell division topological specificity factor from Rhizobium meliloti (strain 1021) (Ensifer meliloti).